Consider the following 292-residue polypeptide: Acetyl-coenzyme A carboxylase carboxyl transferase subunit beta (292 aa).

In terms of domain architecture, CoA carboxyltransferase N-terminal spans 23-292 (VWSKCTACGN…TEATEVSVNE (270 aa)). 4 residues coordinate Zn(2+): cysteine 27, cysteine 30, cysteine 46, and cysteine 49. Residues 27–49 (CTACGNIIYKADLERSLNVCPKC) form a C4-type zinc finger.

It belongs to the AccD/PCCB family. As to quaternary structure, acetyl-CoA carboxylase is a heterohexamer composed of biotin carboxyl carrier protein (AccB), biotin carboxylase (AccC) and two subunits each of ACCase subunit alpha (AccA) and ACCase subunit beta (AccD). Requires Zn(2+) as cofactor.

It is found in the cytoplasm. The catalysed reaction is N(6)-carboxybiotinyl-L-lysyl-[protein] + acetyl-CoA = N(6)-biotinyl-L-lysyl-[protein] + malonyl-CoA. It functions in the pathway lipid metabolism; malonyl-CoA biosynthesis; malonyl-CoA from acetyl-CoA: step 1/1. Its function is as follows. Component of the acetyl coenzyme A carboxylase (ACC) complex. Biotin carboxylase (BC) catalyzes the carboxylation of biotin on its carrier protein (BCCP) and then the CO(2) group is transferred by the transcarboxylase to acetyl-CoA to form malonyl-CoA. This chain is Acetyl-coenzyme A carboxylase carboxyl transferase subunit beta, found in Idiomarina loihiensis (strain ATCC BAA-735 / DSM 15497 / L2-TR).